A 101-amino-acid chain; its full sequence is Protein Tat (101 aa).

An interaction with human CREBBP region spans residues 1–24; that stretch reads MEPVDPNLEPWKHPGSQPRTACNN. Positions 1 to 48 are transactivation; sequence MEPVDPNLEPWKHPGSQPRTACNNCYCKKCCFHCQVCFTKKGLGISYG. 3 residues coordinate Zn(2+): cysteine 22, cysteine 25, and cysteine 27. A cysteine-rich region spans residues 22–37; sequence CNNCYCKKCCFHCQVC. An N6-acetyllysine; by host PCAF modification is found at lysine 28. Zn(2+)-binding residues include cysteine 30, histidine 33, cysteine 34, and cysteine 37. Residues 38-48 form a core region; it reads FTKKGLGISYG. Positions 47–101 are disordered; the sequence is YGRKKRRQRRRPPQDSQTHQSSLSKQPTSQLRGDPTGPTESKKKVERETETDPVH. Residues 48-57 show a composition bias toward basic residues; sequence GRKKRRQRRR. The short motif at 49 to 57 is the Nuclear localization signal, RNA-binding (TAR), and protein transduction element; sequence RKKRRQRRR. Positions 49 to 86 are interaction with the host capping enzyme RNGTT; the sequence is RKKRRQRRRPPQDSQTHQSSLSKQPTSQLRGDPTGPTE. N6-acetyllysine; by host EP300 and GCN5L2 occurs at positions 50 and 51. 2 positions are modified to asymmetric dimethylarginine; by host PRMT6: arginine 52 and arginine 53. The segment covering 61 to 77 has biased composition (polar residues); that stretch reads DSQTHQSSLSKQPTSQL. Residue lysine 71 forms a Glycyl lysine isopeptide (Lys-Gly) (interchain with G-Cter in ubiquitin) linkage. A Cell attachment site motif is present at residues 78-80; that stretch reads RGD. Over residues 86–101 the composition is skewed to basic and acidic residues; that stretch reads ESKKKVERETETDPVH.

It belongs to the lentiviruses Tat family. As to quaternary structure, interacts with host CCNT1. Associates with the P-TEFb complex composed at least of Tat, P-TEFb (CDK9 and CCNT1), TAR RNA, RNA Pol II. Recruits the HATs CREBBP, TAF1/TFIID, EP300, PCAF and GCN5L2. Interacts with host KAT5/Tip60; this interaction targets the latter to degradation. Interacts with the host deacetylase SIRT1. Interacts with host capping enzyme RNGTT; this interaction stimulates RNGTT. Binds to host KDR, and to the host integrins ITGAV/ITGB3 and ITGA5/ITGB1. Interacts with host KPNB1/importin beta-1 without previous binding to KPNA1/importin alpha-1. Interacts with EIF2AK2. Interacts with host nucleosome assembly protein NAP1L1; this interaction may be required for the transport of Tat within the nucleus, since the two proteins interact at the nuclear rim. Interacts with host C1QBP/SF2P32; this interaction involves lysine-acetylated Tat. Interacts with the host chemokine receptors CCR2, CCR3 and CXCR4. Interacts with host DPP4/CD26; this interaction may trigger an anti-proliferative effect. Interacts with host LDLR. Interacts with the host extracellular matrix metalloproteinase MMP1. Interacts with host PRMT6; this interaction mediates Tat's methylation. Interacts with, and is ubiquitinated by MDM2/Hdm2. Interacts with host PSMC3 and HTATIP2. Interacts with STAB1; this interaction may overcome SATB1-mediated repression of IL2 and IL2RA (interleukin) in T cells by binding to the same domain than HDAC1. Interacts (when acetylated) with human CDK13, thereby increasing HIV-1 mRNA splicing and promoting the production of the doubly spliced HIV-1 protein Nef. Interacts with host TBP; this interaction modulates the activity of transcriptional pre-initiation complex. Interacts with host RELA. Interacts with host PLSCR1; this interaction negatively regulates Tat transactivation activity by altering its subcellular distribution. In terms of processing, asymmetrical arginine methylation by host PRMT6 seems to diminish the transactivation capacity of Tat and affects the interaction with host CCNT1. Post-translationally, acetylation by EP300, CREBBP, GCN5L2/GCN5 and PCAF regulates the transactivation activity of Tat. EP300-mediated acetylation of Lys-50 promotes dissociation of Tat from the TAR RNA through the competitive binding to PCAF's bromodomain. In addition, the non-acetylated Tat's N-terminus can also interact with PCAF. PCAF-mediated acetylation of Lys-28 enhances Tat's binding to CCNT1. Lys-50 is deacetylated by SIRT1. Polyubiquitination by host MDM2 does not target Tat to degradation, but activates its transactivation function and fosters interaction with CCNT1 and TAR RNA. In terms of processing, phosphorylated by EIF2AK2 on serine and threonine residues adjacent to the basic region important for TAR RNA binding and function. Phosphorylation of Tat by EIF2AK2 is dependent on the prior activation of EIF2AK2 by dsRNA.

It localises to the host nucleus. It is found in the host nucleolus. The protein resides in the host cytoplasm. The protein localises to the secreted. Transcriptional activator that increases RNA Pol II processivity, thereby increasing the level of full-length viral transcripts. Recognizes a hairpin structure at the 5'-LTR of the nascent viral mRNAs referred to as the transactivation responsive RNA element (TAR) and recruits the cyclin T1-CDK9 complex (P-TEFb complex) that will in turn hyperphosphorylate the RNA polymerase II to allow efficient elongation. The CDK9 component of P-TEFb and other Tat-activated kinases hyperphosphorylate the C-terminus of RNA Pol II that becomes stabilized and much more processive. Other factors such as HTATSF1/Tat-SF1, SUPT5H/SPT5, and HTATIP2 are also important for Tat's function. Besides its effect on RNA Pol II processivity, Tat induces chromatin remodeling of proviral genes by recruiting the histone acetyltransferases (HATs) CREBBP, EP300 and PCAF to the chromatin. This also contributes to the increase in proviral transcription rate, especially when the provirus integrates in transcriptionally silent region of the host genome. To ensure maximal activation of the LTR, Tat mediates nuclear translocation of NF-kappa-B by interacting with host RELA. Through its interaction with host TBP, Tat may also modulate transcription initiation. Tat can reactivate a latently infected cell by penetrating in it and transactivating its LTR promoter. In the cytoplasm, Tat is thought to act as a translational activator of HIV-1 mRNAs. Functionally, extracellular circulating Tat can be endocytosed by surrounding uninfected cells via the binding to several surface receptors such as CD26, CXCR4, heparan sulfate proteoglycans (HSPG) or LDLR. Neurons are rarely infected, but they internalize Tat via their LDLR. Through its interaction with nuclear HATs, Tat is potentially able to control the acetylation-dependent cellular gene expression. Modulates the expression of many cellular genes involved in cell survival, proliferation or in coding for cytokines or cytokine receptors. Tat plays a role in T-cell and neurons apoptosis. Tat induced neurotoxicity and apoptosis probably contribute to neuroAIDS. Circulating Tat also acts as a chemokine-like and/or growth factor-like molecule that binds to specific receptors on the surface of the cells, affecting many cellular pathways. In the vascular system, Tat binds to ITGAV/ITGB3 and ITGA5/ITGB1 integrins dimers at the surface of endothelial cells and competes with bFGF for heparin-binding sites, leading to an excess of soluble bFGF. This chain is Protein Tat, found in Human immunodeficiency virus type 1 group M subtype B (isolate YU-2) (HIV-1).